The following is a 274-amino-acid chain: NADPH-dependent 7-cyano-7-deazaguanine reductase (274 aa).

80 to 82 (VES) is a binding site for substrate. An NADPH-binding site is contributed by 82–83 (SK). Cys-181 functions as the Thioimide intermediate in the catalytic mechanism. Asp-188 serves as the catalytic Proton donor. Substrate is bound at residue 220–221 (HE). 249–250 (RG) is a binding site for NADPH.

Belongs to the GTP cyclohydrolase I family. QueF type 2 subfamily. Homodimer.

The protein resides in the cytoplasm. It carries out the reaction 7-aminomethyl-7-carbaguanine + 2 NADP(+) = 7-cyano-7-deazaguanine + 2 NADPH + 3 H(+). Its pathway is tRNA modification; tRNA-queuosine biosynthesis. Catalyzes the NADPH-dependent reduction of 7-cyano-7-deazaguanine (preQ0) to 7-aminomethyl-7-deazaguanine (preQ1). The chain is NADPH-dependent 7-cyano-7-deazaguanine reductase from Burkholderia ambifaria (strain MC40-6).